The following is a 93-amino-acid chain: Small ribosomal subunit protein uS19 (93 aa).

The protein belongs to the universal ribosomal protein uS19 family.

Functionally, protein S19 forms a complex with S13 that binds strongly to the 16S ribosomal RNA. The chain is Small ribosomal subunit protein uS19 from Mycobacterium tuberculosis (strain ATCC 25177 / H37Ra).